A 410-amino-acid chain; its full sequence is Calsequestrin-2 (410 aa).

Residues 1-19 (MKRTHLFIAGLYLLASCRA) form the signal peptide. The tract at residues 221-242 (MDEPIAIPDKPYTEEELVEFVK) is calcium regulated hydrophobic site. Position 282 is a phosphotyrosine (tyrosine 282). N-linked (GlcNAc...) asparagine glycans are attached at residues asparagine 335 and asparagine 395. Positions 364 to 410 (DVLSGKINTEDDDNEEGDDGDDDEDDDDDDGNNSDEESNDDSDDDDE) are disordered. Residues 373-410 (EDDDNEEGDDGDDDEDDDDDDGNNSDEESNDDSDDDDE) show a composition bias toward acidic residues. Serine 397, serine 401, and serine 405 each carry phosphoserine; by CK2.

This sequence belongs to the calsequestrin family. In terms of assembly, interacts with ASPH. Monomer, homodimer and homooligomer. Mostly monomeric in the absence of calcium. Forms higher oligomers in a calcium-dependent manner. Dimers associate to form tetramers, that then form linear homomer chains. Interacts with TRDN. In terms of processing, phosphorylation in the C-terminus, probably by CK2, moderately increases calcium buffering capacity. N-glycosylated. As to expression, detected in heart muscle (at protein level).

Its subcellular location is the sarcoplasmic reticulum lumen. Its function is as follows. Calsequestrin is a high-capacity, moderate affinity, calcium-binding protein and thus acts as an internal calcium store in muscle. Calcium ions are bound by clusters of acidic residues at the protein surface, especially at the interface between subunits. Can bind around 60 Ca(2+) ions. Regulates the release of lumenal Ca(2+) via the calcium release channel RYR2; this plays an important role in triggering muscle contraction. Plays a role in excitation-contraction coupling in the heart and in regulating the rate of heart beats. The chain is Calsequestrin-2 (CASQ2) from Canis lupus familiaris (Dog).